A 396-amino-acid polypeptide reads, in one-letter code: Dimethyladenosine transferase 2, mitochondrial (396 aa).

Residues 1–43 (MRGPAMRLPPRIALSALARGPSCILGSGAATRKDWQTRNRRGF) constitute a mitochondrion transit peptide. The segment at 43–71 (FSDFNIEPLPDSDLEESSPWTSRNRSEPT) is disordered. Positions 74, 123, and 149 each coordinate S-adenosyl-L-methionine. Residues 328–329 (KR) are DNA-binding.

It belongs to the class I-like SAM-binding methyltransferase superfamily. rRNA adenine N(6)-methyltransferase family. KsgA subfamily. As to quaternary structure, homodimer. Component of the mitochondrial transcription initiation complex, composed at least of TFB2M, TFAM and POLRMT. In this complex TFAM recruits POLRMT to the promoter whereas TFB2M induces structural changes in POLRMT to enable promoter opening and trapping of the DNA non-template strand. Interacts with mitochondrial RNA polymerase POLRMT. Interacts with TFAM. As to expression, ubiquitously expressed.

The protein localises to the mitochondrion. It catalyses the reaction adenosine in rRNA + S-adenosyl-L-methionine = N(6)-methyladenosine in rRNA + S-adenosyl-L-homocysteine + H(+). Functionally, S-adenosyl-L-methionine-dependent rRNA methyltransferase which may methylate two specific adjacent adenosines in the loop of a conserved hairpin near the 3'-end of 12S mitochondrial rRNA. Component of the mitochondrial transcription initiation complex, composed at least of TFB2M, TFAM and POLRMT that is required for basal transcription of mitochondrial DNA. In this complex, TFAM recruits POLRMT to a specific promoter whereas TFB2M induces structural changes in POLRMT to enable promoter opening and trapping of the DNA non-template strand. Stimulates transcription independently of the methyltransferase activity. The sequence is that of Dimethyladenosine transferase 2, mitochondrial from Mus musculus (Mouse).